Here is a 438-residue protein sequence, read N- to C-terminus: Histidine--tRNA ligase (438 aa).

It belongs to the class-II aminoacyl-tRNA synthetase family. In terms of assembly, homodimer.

It localises to the cytoplasm. It catalyses the reaction tRNA(His) + L-histidine + ATP = L-histidyl-tRNA(His) + AMP + diphosphate + H(+). This chain is Histidine--tRNA ligase, found in Blochmanniella pennsylvanica (strain BPEN).